The primary structure comprises 342 residues: HPr kinase/phosphorylase (342 aa).

Residues H153 and K174 contribute to the active site. 168-175 (GKSGLGKS) is an ATP binding site. S175 lines the Mg(2+) pocket. The active-site Proton acceptor; for phosphorylation activity. Proton donor; for dephosphorylation activity is D192. An important for the catalytic mechanism of both phosphorylation and dephosphorylation region spans residues 217 to 226 (MEIRGLGVVD). Position 218 (E218) interacts with Mg(2+). The active site involves R259. Positions 280 to 285 (PIFPGK) are important for the catalytic mechanism of dephosphorylation.

This sequence belongs to the HPrK/P family. In terms of assembly, homohexamer. It depends on Mg(2+) as a cofactor.

It carries out the reaction [HPr protein]-L-serine + ATP = [HPr protein]-O-phospho-L-serine + ADP + H(+). The enzyme catalyses [HPr protein]-O-phospho-L-serine + phosphate + H(+) = [HPr protein]-L-serine + diphosphate. Functionally, catalyzes the ATP- as well as the pyrophosphate-dependent phosphorylation of a specific serine residue in HPr, a phosphocarrier protein of the phosphoenolpyruvate-dependent sugar phosphotransferase system (PTS). HprK/P also catalyzes the pyrophosphate-producing, inorganic phosphate-dependent dephosphorylation (phosphorolysis) of seryl-phosphorylated HPr (P-Ser-HPr). The chain is HPr kinase/phosphorylase from Chlorobaculum tepidum (strain ATCC 49652 / DSM 12025 / NBRC 103806 / TLS) (Chlorobium tepidum).